Here is an 83-residue protein sequence, read N- to C-terminus: CLAVATA3/ESR (CLE)-related protein 20 (83 aa).

A signal peptide spans 1-29; it reads MKNKNMNPSRPRLLCLIVFLFLVIVLSKA.

The protein belongs to the CLV3/ESR signal peptide family. As to expression, mostly expressed in roots, seedlings, leaves, flowers, stems and apex, and, to a lower extent, in siliques and pollen.

The protein resides in the secreted. It is found in the extracellular space. Extracellular signal peptide that regulates cell fate. Represses root apical meristem maintenance. Inhibits irreversibly root growth by reducing cell division rates in the root apical meristem. Regulates the transition of protophloem cells from proliferation to differentiation, thus impinging on postembryonic growth capacity of the root meristem; this signaling pathway requires CRN and CLV2. The polypeptide is CLAVATA3/ESR (CLE)-related protein 20 (Arabidopsis thaliana (Mouse-ear cress)).